Reading from the N-terminus, the 403-residue chain is F-box/kelch-repeat protein At5g43190 (403 aa).

The F-box domain occupies 45 to 91 (PNIWSNLPNHLLEHILSLLPFKTLLTLRSISRHLRSLILSPSFISDH). Kelch repeat units lie at residues 91–140 (HSFS…LLSS), 192–240 (KIFT…VFYN), 291–339 (ILYM…VCYH), and 343–393 (HVYC…FRWF).

This chain is F-box/kelch-repeat protein At5g43190, found in Arabidopsis thaliana (Mouse-ear cress).